Reading from the N-terminus, the 131-residue chain is Holo-[acyl-carrier-protein] synthase (131 aa).

D9 and E58 together coordinate Mg(2+).

The protein belongs to the P-Pant transferase superfamily. AcpS family. Mg(2+) serves as cofactor.

The protein localises to the cytoplasm. The catalysed reaction is apo-[ACP] + CoA = holo-[ACP] + adenosine 3',5'-bisphosphate + H(+). In terms of biological role, transfers the 4'-phosphopantetheine moiety from coenzyme A to a Ser of acyl-carrier-protein. The polypeptide is Holo-[acyl-carrier-protein] synthase (Salmonella arizonae (strain ATCC BAA-731 / CDC346-86 / RSK2980)).